The sequence spans 434 residues: Protein maelstrom homolog (434 aa).

Positions 4–73 (RRGSRNAYYF…AQGKDAGPWE (70 aa)) form a DNA-binding region, HMG box. A disordered region spans residues 357–387 (SHFSSSNQEQRSNTPTGDYPSGVKISGQSSS). Polar residues predominate over residues 363–372 (NQEQRSNTPT).

Belongs to the maelstrom family. As to quaternary structure, interacts with SMARCB1, SIN3B and DDX4. Interacts with piRNA-associated proteins TDRD1, PIWIL1 and PIWIL2. Interacts with TEX19.

It is found in the cytoplasm. Its subcellular location is the nucleus. Functionally, plays a central role during spermatogenesis by repressing transposable elements and preventing their mobilization, which is essential for the germline integrity. Acts via the piRNA metabolic process, which mediates the repression of transposable elements during meiosis by forming complexes composed of piRNAs and Piwi proteins and governs the methylation and subsequent repression of transposons. Its association with piP-bodies suggests a participation in the secondary piRNAs metabolic process. Required for the localization of germ-cell factors to the meiotic nuage. This chain is Protein maelstrom homolog (MAEL), found in Sus scrofa (Pig).